A 123-amino-acid polypeptide reads, in one-letter code: MPTINQLIRKERKKQVKKSKSPALVKCPQRRGVCTRVYTTTPKKPNSALRKVAKVRLTSGFEVISYIGGEGHNLQEHSIVLVRGGRIKDLPGVKYHIVRGALDASGVTGRTVARSKYGTKKPK.

Positions 1–24 are disordered; it reads MPTINQLIRKERKKQVKKSKSPAL. A compositionally biased stretch (basic residues) spans 10–20; it reads KERKKQVKKSK. Asp-89 bears the 3-methylthioaspartic acid mark.

Belongs to the universal ribosomal protein uS12 family. As to quaternary structure, part of the 30S ribosomal subunit. Contacts proteins S8 and S17. May interact with IF1 in the 30S initiation complex.

Its function is as follows. With S4 and S5 plays an important role in translational accuracy. Interacts with and stabilizes bases of the 16S rRNA that are involved in tRNA selection in the A site and with the mRNA backbone. Located at the interface of the 30S and 50S subunits, it traverses the body of the 30S subunit contacting proteins on the other side and probably holding the rRNA structure together. The combined cluster of proteins S8, S12 and S17 appears to hold together the shoulder and platform of the 30S subunit. The protein is Small ribosomal subunit protein uS12 of Sulfurovum sp. (strain NBC37-1).